The primary structure comprises 279 residues: uncharacterized protein (279 aa).

2 disordered regions span residues 50-109 and 249-279; these read YTYN…YNKN and SQSQ…SPKL. Positions 68-109 are enriched in low complexity; that stretch reads NNNSNYNNNNNNNNNNNNNNNNNNNNNNNKNNNNNNYNYNKN.

This is an uncharacterized protein from Dictyostelium discoideum (Social amoeba).